The following is a 113-amino-acid chain: Ubiquinol-cytochrome-c reductase complex assembly factor 4 (113 aa).

Residues 1–18 (MWGSLCKAPLLRLRPTFA) form the signal peptide. The Mitochondrial matrix segment spans residues 19-72 (AVSNVKTIHIKASPDYNEGIDKSKPLKFSTSKASHRHWTVAKSLGSNQQRPWWK). The helical transmembrane segment at 73–89 (VVPLSVFLTTVLLWAIF) threads the bilayer. Topologically, residues 90–113 (RKETDIDEAIYKPIEQLQDESENK) are mitochondrial intermembrane.

This sequence belongs to the UQCC4 family.

It localises to the mitochondrion inner membrane. Its function is as follows. Required for the assembly and stability of the mitochondrial ubiquinol-cytochrome c reductase complex (complex III (CIII) or cytochrome b-c1 complex), a multisubunit transmembrane complex that is part of the mitochondrial electron transport chain (ETC) which drives oxidative phosphorylation. The chain is Ubiquinol-cytochrome-c reductase complex assembly factor 4 (uqcc4) from Xenopus tropicalis (Western clawed frog).